Consider the following 153-residue polypeptide: NAD(P)H-quinone oxidoreductase subunit N (153 aa).

Belongs to the complex I NdhN subunit family. As to quaternary structure, NDH-1 can be composed of about 15 different subunits; different subcomplexes with different compositions have been identified which probably have different functions.

It is found in the cellular thylakoid membrane. It carries out the reaction a plastoquinone + NADH + (n+1) H(+)(in) = a plastoquinol + NAD(+) + n H(+)(out). The enzyme catalyses a plastoquinone + NADPH + (n+1) H(+)(in) = a plastoquinol + NADP(+) + n H(+)(out). In terms of biological role, NDH-1 shuttles electrons from an unknown electron donor, via FMN and iron-sulfur (Fe-S) centers, to quinones in the respiratory and/or the photosynthetic chain. The immediate electron acceptor for the enzyme in this species is believed to be plastoquinone. Couples the redox reaction to proton translocation, and thus conserves the redox energy in a proton gradient. Cyanobacterial NDH-1 also plays a role in inorganic carbon-concentration. The protein is NAD(P)H-quinone oxidoreductase subunit N of Parasynechococcus marenigrum (strain WH8102).